Reading from the N-terminus, the 182-residue chain is Translation initiation factor IF-3 (182 aa).

It belongs to the IF-3 family. As to quaternary structure, monomer.

It localises to the cytoplasm. IF-3 binds to the 30S ribosomal subunit and shifts the equilibrium between 70S ribosomes and their 50S and 30S subunits in favor of the free subunits, thus enhancing the availability of 30S subunits on which protein synthesis initiation begins. This is Translation initiation factor IF-3 from Tropheryma whipplei (strain TW08/27) (Whipple's bacillus).